A 498-amino-acid polypeptide reads, in one-letter code: uncharacterized protein (498 aa).

11 helical membrane-spanning segments follow: residues 54–74 (LLKM…MAFL), 100–120 (VAVS…VVLV), 128–148 (MLAF…FMSS), 150–170 (GGLI…FPAL), 188–208 (SYLF…AYAL), 221–241 (WIYI…LFAL), 302–322 (VLYG…FVGL), 326–346 (YMTI…AWLS), 353–373 (AVYL…MLAS), 381–401 (TATY…LGWL), and 446–466 (AFTL…FFSL).

It belongs to the major facilitator superfamily. Allantoate permease family.

The protein resides in the membrane. This is an uncharacterized protein from Schizosaccharomyces pombe (strain 972 / ATCC 24843) (Fission yeast).